The chain runs to 291 residues: Popeye domain-containing protein 3 (291 aa).

Asn4 carries an N-linked (GlcNAc...) asparagine glycan. Transmembrane regions (helical) follow at residues 27–44 (GAIYHLASILFVVGFMGG), 48–70 (FGLLYVFSLLGLGFLCSAVWAWV), and 77–99 (IFSWNFVLFVICFMQFVHIAYQV).

It belongs to the popeye family. In terms of tissue distribution, expressed predominantly in skeletal muscle (at protein level). Also detected in heart.

It localises to the membrane. Functionally, may play a role in the maintenance of heart function mediated, at least in part, through cAMP-binding. May play a role in the regulation of KCNK2/TREK-1-mediated current amplitude. The chain is Popeye domain-containing protein 3 (POPDC3) from Homo sapiens (Human).